The following is a 507-amino-acid chain: Anaerobic nitric oxide reductase transcription regulator NorR (507 aa).

Position 57 is a 4-aspartylphosphate (D57). One can recognise a Sigma-54 factor interaction domain in the interval 188 to 417 (IIGLSSVMQQ…LEHSIYRAAI (230 aa)). Residues 216–223 (GETGVGKE) and 279–288 (ADNGTLFLDE) each bind ATP. Residues 483–502 (WAATARKLELDSGNLHRLAK) constitute a DNA-binding region (H-T-H motif).

It functions in the pathway nitrogen metabolism; nitric oxide reduction. Required for the expression of anaerobic nitric oxide (NO) reductase, acts as a transcriptional activator for at least the norVW operon. Activation also requires sigma-54. The protein is Anaerobic nitric oxide reductase transcription regulator NorR of Serratia proteamaculans (strain 568).